Here is a 414-residue protein sequence, read N- to C-terminus: Wilms tumor protein homolog A (414 aa).

Residues Lys-55 and Lys-158 each participate in a glycyl lysine isopeptide (Lys-Gly) (interchain with G-Cter in SUMO) cross-link. The 9aaTAD signature appears at 217 to 225 (MTWNQMNLG). 3 C2H2-type zinc fingers span residues 288-312 (FMCAYPGCNKRYFKLSHLQMHSRKH), 318-342 (YQCDFKDCERRFSRSDQLKRHQRRH), and 348-370 (FQCKTCQRKFSRSDHLKTHTRTH). 2 important for interaction with target DNA regions span residues 332-346 (SDQLKRHQRRHTGIK) and 358-366 (SRSDHLKTH). The KTS motif signature appears at 373–375 (KTS). A C2H2-type 4 zinc finger spans residues 379-403 (FSCRWPSCQKKFARSDELVRHHNMH).

Belongs to the EGR C2H2-type zinc-finger protein family. As to expression, expressed around the pronephric anlage and in the pronephros; expression is restricted to the splanchnic mesoderm (the site where the glomus forms) from tailbud stages, and the glomus of early tadpoles. Not expressed in the pronephric tubules or pronephric duct. In tadpoles (stage 38-39), additional expression begins in the heart. Also expressed in the adult kidney (mesonephros).

Its subcellular location is the nucleus. The protein resides in the cytoplasm. The protein localises to the nucleus speckle. In terms of biological role, transcription factor required for development of the vascular component of the pronephric kidney, the glomus; may repress tubule-specific gene expression in the portion of the pronephros fated to form the glomus. Recognizes and binds to the DNA sequence 5'-GCG(T/G)GGGCG-3'. Inhibits Wnt-signaling during embryonic development. Function may be isoform-specific: the isoform containing the KTS motif is less effective in inhibiting wnt signaling. This Xenopus laevis (African clawed frog) protein is Wilms tumor protein homolog A (wt1-a).